Reading from the N-terminus, the 219-residue chain is Leukocyte surface antigen CD53 (219 aa).

The Cytoplasmic portion of the chain corresponds to 1–11 (MGMSSLKLLKY). The chain crosses the membrane as a helical span at residues 12 to 32 (VLFFFNLLFWICGCCILGFGI). The Extracellular segment spans residues 33 to 54 (YLLIHNNFGVLFHNLPSLTLGN). A helical transmembrane segment spans residues 55-69 (VFVIVGSIIMVVAFL). At 70–80 (GCMGSIKENKC) the chain is on the cytoplasmic side. The chain crosses the membrane as a helical span at residues 81 to 106 (LLMSFFILLLIILLAEVTLAILLFVY). Topologically, residues 107–181 (EQKLNEYVAK…AKARLWFHSN (75 aa)) are extracellular. 2 N-linked (GlcNAc...) asparagine glycosylation sites follow: Asn-129 and Asn-148. A helical transmembrane segment spans residues 182–206 (FLYIGIITICVCVIEVLGMSFALTL). The Cytoplasmic segment spans residues 207 to 219 (NCQIDKTSQTIGL).

The protein belongs to the tetraspanin (TM4SF) family. As to quaternary structure, interacts with SCIMP. Interacts with CD45/PTPRC. Interacts with IL7R. Interacts with RBL2 and PPP2CA. B-cells, monocytes, macrophages, neutrophils, single (CD4 or CD8) positive thymocytes and peripheral T-cells.

Its subcellular location is the cell membrane. The protein localises to the cell junction. It localises to the membrane. It is found in the synapse. Its function is as follows. Structural component of specialized membrane microdomains known as tetraspanin-enriched microdomains (TERMs), which act as platforms for receptor clustering and signaling. Participates thereby in diverse biological functions such as cell signal transduction, adhesion, migration and protein trafficking. Plays a role in the activation of monocytes and B-cells. Acts as an essential regulator of B-cell development by promoting interleukin-7 receptor/IL7R signaling. Also promotes, in B-cells, the BCR signaling by recruiting PKC to the plasma membrane in order to phosphorylate its substrates. Plays an essential role in B- and T-cells homing to lymph nodes by stabilizing L-selectin/SELL cell surface expression. Also mediates metabolic and inflammatory functions in hepatocytes and adipose tissue by promoting TNF-alpha and LPS signaling independent of the immune compartment. In Homo sapiens (Human), this protein is Leukocyte surface antigen CD53 (CD53).